The chain runs to 901 residues: MLIKLLTKVFGSRNDRTLRRMRKVVNIINAMEPEMEKLSDEELKGKTAEFRARLEKGEVLENLIPEAFAVVREASKRVFGMRHFDVQLLGGMVLNERCIAEMRTGEGKTLTATLPAYLNALTGKGVHVVTVNDYLAQRDAENNRPLFEFLGLTVGINLPGMPAPAKREAYAADITYGTNNEYGFDYLRDNMAFSPEERVQRKLHYALVDEVDSILIDEARTPLIISGPAEDSSEMYKRVNKIIPHLIRQEKEDSETFQGEGHFSVDEKSRQVNLTERGLVLIEELLVKEGIMDEGESLYSPANIMLMHHVTAALRAHALFTRDVDYIVKDGEVIIVDEHTGRTMQGRRWSDGLHQAVEAKEGVQIQNENQTLASITFQNYFRLYEKLAGMTGTADTEAFEFSSIYKLDTVVVPTNRPMIRKDLPDLVYMTEAEKIQAIIEDIKERTAKGQPVLVGTISIEKSELVSNELTKAGIKHNVLNAKFHANEAAIVAQAGYPAAVTIATNMAGRGTDIVLGGSWQAEVAALENPTAEQIEKIKADWQVRHDAVLAAGGLHIIGTERHESRRIDNQLRGRSGRQGDAGSSRFYLSMEDALMRIFASDRVSGMMRKLGMKPGEAIEHPWVTKAIANAQRKVESRNFDIRKQLLEYDDVANDQRRAIYSQRNELLDVSDVSETINSIREDVFKATIDAYIPPQSLEEMWDIPGLQERLKNDFDLDLPIAEWLDKEPELHEETLRERILAQSIEVYQRKEEVVGAEMMRHFEKGVMLQTLDSLWKEHLAAMDYLRQGIHLRGYAQKDPKQEYKRESFSMFAAMLESLKYEVISTLSKVQVRMPEEVEELEQQRRMEAERLAQMQQLSHQDDDSAAAAALAAQTGERKVGRNDPCPCGSGKKYKQCHGRLQ.

Residues glutamine 87, 105-109, and aspartate 512 contribute to the ATP site; that span reads GEGKT. Residues 859–901 form a disordered region; sequence HQDDDSAAAAALAAQTGERKVGRNDPCPCGSGKKYKQCHGRLQ. Cysteine 885, cysteine 887, cysteine 896, and histidine 897 together coordinate Zn(2+). Positions 891–901 are enriched in basic residues; sequence KKYKQCHGRLQ.

Belongs to the SecA family. In terms of assembly, monomer and homodimer. Part of the essential Sec protein translocation apparatus which comprises SecA, SecYEG and auxiliary proteins SecDF-YajC and YidC. It depends on Zn(2+) as a cofactor.

Its subcellular location is the cell inner membrane. The protein resides in the cytoplasm. It catalyses the reaction ATP + H2O + cellular proteinSide 1 = ADP + phosphate + cellular proteinSide 2.. Functionally, part of the Sec protein translocase complex. Interacts with the SecYEG preprotein conducting channel. Has a central role in coupling the hydrolysis of ATP to the transfer of proteins into and across the cell membrane, serving both as a receptor for the preprotein-SecB complex and as an ATP-driven molecular motor driving the stepwise translocation of polypeptide chains across the membrane. The chain is Protein translocase subunit SecA from Escherichia coli O157:H7.